A 39-amino-acid chain; its full sequence is Non-specific lipid-transfer protein (39 aa).

It belongs to the plant LTP family.

In terms of biological role, plant non-specific lipid-transfer proteins transfer phospholipids as well as galactolipids across membranes. May play a role in wax or cutin deposition in the cell walls of expanding epidermal cells and certain secretory tissues. This Musa acuminata (Banana) protein is Non-specific lipid-transfer protein.